We begin with the raw amino-acid sequence, 1088 residues long: Neural cell adhesion molecule 1-A (1088 aa).

An N-terminal signal peptide occupies residues 1 to 19 (MLHIKDLIWTLYFIGTAVA). Ig-like C2-type domains follow at residues 20 to 108 (LEVN…GTVN), 113 to 202 (QKLT…KDIQ), 209 to 294 (PTIQ…AEAT), 303 to 397 (PKIT…FEVQ), and 400 to 484 (PKIR…HEFS). Residues 20–705 (LEVNIVPDQG…TASAGTGLGT (686 aa)) are Extracellular-facing. 2 disulfide bridges follow: Cys-41/Cys-93 and Cys-136/Cys-186. Asn-82 carries N-linked (GlcNAc...) asparagine glycosylation. Heparin contacts are provided by residues 149 to 153 (RHKGK) and 158 to 162 (KKDVR). A glycan (N-linked (GlcNAc...) asparagine) is linked at Asn-219. Cysteines 232 and 282 form a disulfide. 5 N-linked (GlcNAc...) asparagine glycosylation sites follow: Asn-310, Asn-341, Asn-417, Asn-443, and Asn-472. A disulfide bridge links Cys-323 with Cys-379. A disulfide bridge links Cys-420 with Cys-473. 2 Fibronectin type-III domains span residues 493 to 592 (TPSS…TQPV) and 594 to 690 (EPSA…TAKP). A helical transmembrane segment spans residues 706–723 (GAIVGILIVIFVLLLVVV). The Cytoplasmic portion of the chain corresponds to 724 to 1088 (DVTCFFLNKC…TQTNANESKA (365 aa)). Residues 758-784 (EGKAAFSKDESKEPIVEVRTEEERTPN) show a composition bias toward basic and acidic residues. Disordered regions lie at residues 758 to 802 (EGKA…LTEP), 829 to 1000 (FATA…DGGT), and 1024 to 1088 (VASG…ESKA). Low complexity-rich tracts occupy residues 835–847 (SPTS…TSST), 854–875 (APDS…APTT), and 913–936 (PSAA…VPPN). Polar residues predominate over residues 965–974 (QPSTVKNPTE). A compositionally biased stretch (basic and acidic residues) spans 1046 to 1064 (AKTEKTQVEEKSKPEEIDV). Positions 1076 to 1088 (NEATQTNANESKA) are enriched in polar residues.

In terms of processing, polysialylated by ST8SIA2 and ST8SIA4. Polysialylation modulates cell interactions by confering both attractive and repulsive properties that are highly regulated by ST8SIA2 and ST8SIA4. Polysialylation is formed on a-2,3-linked sialic acid of core glycans. As to expression, expressed in neuron and in presumptive neural tissue.

It is found in the cell membrane. Its function is as follows. This protein is a cell adhesion molecule involved in neuron-neuron adhesion, neurite fasciculation, outgrowth of neurites, etc. This Xenopus laevis (African clawed frog) protein is Neural cell adhesion molecule 1-A.